A 98-amino-acid chain; its full sequence is Small ribosomal subunit protein eS24 (98 aa).

This sequence belongs to the eukaryotic ribosomal protein eS24 family.

This Thermococcus onnurineus (strain NA1) protein is Small ribosomal subunit protein eS24.